The sequence spans 121 residues: Group 1 truncated hemoglobin (121 aa).

N-acetylmethionine is present on Met1. His73 is a heme binding site.

It belongs to the truncated hemoglobin family. Group I subfamily. Monomer. Requires heme as cofactor.

The protein is Group 1 truncated hemoglobin of Tetrahymena thermophila.